An 89-amino-acid chain; its full sequence is Large ribosomal subunit protein bL27 (89 aa).

The disordered stretch occupies residues 1–22; that stretch reads MAHKKAGGSSRNGRDSESKRLG.

It belongs to the bacterial ribosomal protein bL27 family.

The protein is Large ribosomal subunit protein bL27 of Bartonella tribocorum (strain CIP 105476 / IBS 506).